We begin with the raw amino-acid sequence, 311 residues long: GTP cyclohydrolase MptA (311 aa).

Belongs to the GTP cyclohydrolase IV family. In terms of assembly, homodimer. Requires Fe(2+) as cofactor.

It catalyses the reaction GTP + H2O = 7,8-dihydroneopterin 2',3'-cyclic phosphate + formate + diphosphate + H(+). It participates in cofactor biosynthesis; 5,6,7,8-tetrahydromethanopterin biosynthesis. Functionally, converts GTP to 7,8-dihydro-D-neopterin 2',3'-cyclic phosphate, the first intermediate in the biosynthesis of coenzyme methanopterin. In Methanobrevibacter smithii (strain ATCC 35061 / DSM 861 / OCM 144 / PS), this protein is GTP cyclohydrolase MptA.